The chain runs to 204 residues: MGAYKYMQELWRKKQSDVMRFLLRVRCWQYRQLSSLHRAPRPTRPDKARRLGYKAKQGYVIYRIRVRRGGRKRPVPKGATYGKPVHHGVNQIKFARSLQSVAEERAGRHCGGLRVLNSYWVGEDSTYKFFEVILIDTFHKAIRRNPDTQWITKAVHKHREMRGLTSAGKKSRGLGKGHKFHLTIGGSRRAAWKRRDTLQLHRYR.

It belongs to the eukaryotic ribosomal protein eL15 family. In terms of assembly, component of the large ribosomal subunit.

The protein localises to the cytoplasm. Its function is as follows. Component of the large ribosomal subunit. The ribosome is a large ribonucleoprotein complex responsible for the synthesis of proteins in the cell. The polypeptide is Large ribosomal subunit protein eL15 (rpl15) (Mylopharyngodon piceus (Black carp)).